Consider the following 356-residue polypeptide: A-type ATP synthase subunit C (356 aa).

It belongs to the V-ATPase V0D/AC39 subunit family. As to quaternary structure, has multiple subunits with at least A(3), B(3), C, D, E, F, H, I and proteolipid K(x).

The protein localises to the cell membrane. Component of the A-type ATP synthase that produces ATP from ADP in the presence of a proton gradient across the membrane. The sequence is that of A-type ATP synthase subunit C from Thermoplasma volcanium (strain ATCC 51530 / DSM 4299 / JCM 9571 / NBRC 15438 / GSS1).